We begin with the raw amino-acid sequence, 742 residues long: Zinc finger protein 700 (742 aa).

Residues 1 to 20 (MPCCSHRSCREDPGTSESRE) are disordered. Residues 8-20 (SCREDPGTSESRE) are compositionally biased toward basic and acidic residues. The KRAB domain occupies 24–104 (VAFEDVAVNF…KEDSHCGETF (81 aa)). 9 C2H2-type zinc fingers span residues 194–216 (YACK…MVMH), 222–244 (YKCK…ERTH), 250–272 (YECK…ERTH), 278–300 (YECS…ERSH), 306–328 (YQCK…ERTH), 362–384 (YKCK…EKTH), 390–412 (YKCK…ERIH), 418–440 (YECK…GGTH), and 446–468 (YECK…GRTH). The C2H2-type 10; degenerate zinc-finger motif lies at 474-502 (YECKECGKAFRYVKHLQIHERTEKHIRMP). C2H2-type zinc fingers lie at residues 508–530 (YKCS…EKTH), 536–558 (YECN…ERTH), 564–586 (YECK…ERTH), 592–614 (YECK…GRTH), 620–642 (YECK…ERTH), 648–670 (YECK…ERKH), 676–698 (YECK…ARTH), and 704–726 (YECK…ARTH).

It belongs to the krueppel C2H2-type zinc-finger protein family.

Its subcellular location is the nucleus. Its function is as follows. May be involved in transcriptional regulation. This chain is Zinc finger protein 700 (ZNF700), found in Homo sapiens (Human).